The sequence spans 227 residues: Putative N-acetylmannosamine-6-phosphate 2-epimerase (227 aa).

Belongs to the NanE family.

It catalyses the reaction an N-acyl-D-glucosamine 6-phosphate = an N-acyl-D-mannosamine 6-phosphate. The protein operates within amino-sugar metabolism; N-acetylneuraminate degradation; D-fructose 6-phosphate from N-acetylneuraminate: step 3/5. In terms of biological role, converts N-acetylmannosamine-6-phosphate (ManNAc-6-P) to N-acetylglucosamine-6-phosphate (GlcNAc-6-P). The sequence is that of Putative N-acetylmannosamine-6-phosphate 2-epimerase from Shouchella clausii (strain KSM-K16) (Alkalihalobacillus clausii).